Here is a 130-residue protein sequence, read N- to C-terminus: Small ribosomal subunit protein uS9 (130 aa).

Basic and acidic residues predominate over residues 99 to 110; the sequence is KKAGFLTRDPRM. The disordered stretch occupies residues 99-130; that stretch reads KKAGFLTRDPRMKERKKYGLKKARRAPQFSKR. Over residues 111 to 130 the composition is skewed to basic residues; that stretch reads KERKKYGLKKARRAPQFSKR.

It belongs to the universal ribosomal protein uS9 family.

The chain is Small ribosomal subunit protein uS9 from Clostridium botulinum (strain Alaska E43 / Type E3).